Here is a 337-residue protein sequence, read N- to C-terminus: Phospholipase A1 1 (337 aa).

A signal peptide spans 1–21 (MNFKYSILFICFVKVLDNCYA). The propeptide occupies 22-35 (ADDLTTLRNGTLDR). The cysteines at positions 41 and 124 are disulfide-linked. Ser-174 serves as the catalytic Nucleophile. Catalysis depends on Asp-202, which acts as the Charge relay system. Intrachain disulfides connect Cys-213–Cys-218 and Cys-256–Cys-261. His-263 (charge relay system) is an active-site residue. 3 disulfide bridges follow: Cys-278-Cys-305, Cys-279-Cys-330, and Cys-298-Cys-303.

This sequence belongs to the AB hydrolase superfamily. Lipase family. In terms of tissue distribution, expressed by the venom gland.

The protein resides in the secreted. The enzyme catalyses a 1,2-diacyl-sn-glycero-3-phosphocholine + H2O = a 2-acyl-sn-glycero-3-phosphocholine + a fatty acid + H(+). Catalyzes the hydrolysis of phosphatidylcholine with phospholipase A1 activity. May act as an allergen and induce hemolytic activity. The chain is Phospholipase A1 1 from Polistes dominula (European paper wasp).